Consider the following 201-residue polypeptide: 3-isopropylmalate dehydratase small subunit (201 aa).

The protein belongs to the LeuD family. LeuD type 1 subfamily. In terms of assembly, heterodimer of LeuC and LeuD.

It carries out the reaction (2R,3S)-3-isopropylmalate = (2S)-2-isopropylmalate. Its pathway is amino-acid biosynthesis; L-leucine biosynthesis; L-leucine from 3-methyl-2-oxobutanoate: step 2/4. In terms of biological role, catalyzes the isomerization between 2-isopropylmalate and 3-isopropylmalate, via the formation of 2-isopropylmaleate. In Shewanella pealeana (strain ATCC 700345 / ANG-SQ1), this protein is 3-isopropylmalate dehydratase small subunit.